Here is a 487-residue protein sequence, read N- to C-terminus: Fibroblast growth factor receptor-like 1 (487 aa).

Residues 1-18 (MGLQLALLLAGIVALSDS) form the signal peptide. Over 19 to 371 (ARGPPRIADK…PSSVSSLPWP (353 aa)) the chain is Extracellular. In terms of domain architecture, Ig-like C2-type 1 spans 23–109 (PRIADKVIHR…GSTNVNYTLI (87 aa)). Cysteine 45 and cysteine 93 are oxidised to a cystine. Asparagine 105 carries an N-linked (GlcNAc...) asparagine glycan. Positions 115-125 (SSGKNSQTPEG) are enriched in polar residues. A disordered region spans residues 115–147 (SSGKNSQTPEGSNGEYEDHSGKQWAQPRFTQPA). Ig-like C2-type domains lie at 141–231 (PRFT…YKVE) and 240–348 (PILT…AFLT). A disulfide bridge links cysteine 166 with cysteine 215. N-linked (GlcNAc...) asparagine glycans are attached at residues asparagine 225, asparagine 249, and asparagine 287. Cysteines 262 and 332 form a disulfide. A helical transmembrane segment spans residues 372–392 (VIIGIPAGAVFIFGTILLWLC). The Cytoplasmic portion of the chain corresponds to 393–487 (QTKKKPCSPP…HQHQHIQYQC (95 aa)).

In terms of assembly, interacts with heparin and FGF2. In terms of tissue distribution, expressed in cartilaginous structures.

The protein resides in the cell membrane. In terms of biological role, has a negative effect on cell proliferation. The sequence is that of Fibroblast growth factor receptor-like 1 (FGFRL1) from Gallus gallus (Chicken).